The chain runs to 476 residues: Cysteine--tRNA ligase (476 aa).

Residue cysteine 27 participates in Zn(2+) binding. Residues 29 to 39 (PTTYNYIHLGN) carry the 'HIGH' region motif. Zn(2+) is bound by residues cysteine 207, histidine 232, and glutamate 236. A 'KMSKS' region motif is present at residues 264 to 268 (KMSKS). ATP is bound at residue lysine 267.

The protein belongs to the class-I aminoacyl-tRNA synthetase family. As to quaternary structure, monomer. It depends on Zn(2+) as a cofactor.

It is found in the cytoplasm. It carries out the reaction tRNA(Cys) + L-cysteine + ATP = L-cysteinyl-tRNA(Cys) + AMP + diphosphate. This chain is Cysteine--tRNA ligase, found in Moorella thermoacetica (strain ATCC 39073 / JCM 9320).